We begin with the raw amino-acid sequence, 186 residues long: ATP synthase subunit b (186 aa).

Residues 28-48 traverse the membrane as a helical segment; it reads IVWSIIPFAVILFVFAKVVLP.

It belongs to the ATPase B chain family. F-type ATPases have 2 components, F(1) - the catalytic core - and F(0) - the membrane proton channel. F(1) has five subunits: alpha(3), beta(3), gamma(1), delta(1), epsilon(1). F(0) has three main subunits: a(1), b(2) and c(10-14). The alpha and beta chains form an alternating ring which encloses part of the gamma chain. F(1) is attached to F(0) by a central stalk formed by the gamma and epsilon chains, while a peripheral stalk is formed by the delta and b chains.

It is found in the cell membrane. Functionally, f(1)F(0) ATP synthase produces ATP from ADP in the presence of a proton or sodium gradient. F-type ATPases consist of two structural domains, F(1) containing the extramembraneous catalytic core and F(0) containing the membrane proton channel, linked together by a central stalk and a peripheral stalk. During catalysis, ATP synthesis in the catalytic domain of F(1) is coupled via a rotary mechanism of the central stalk subunits to proton translocation. Its function is as follows. Component of the F(0) channel, it forms part of the peripheral stalk, linking F(1) to F(0). This chain is ATP synthase subunit b, found in Corynebacterium urealyticum (strain ATCC 43042 / DSM 7109).